Reading from the N-terminus, the 407-residue chain is DNA-directed RNA polymerase subunit Rpo1C (407 aa).

This sequence belongs to the RNA polymerase beta' chain family. Part of the RNA polymerase complex.

The protein resides in the cytoplasm. The enzyme catalyses RNA(n) + a ribonucleoside 5'-triphosphate = RNA(n+1) + diphosphate. Its function is as follows. DNA-dependent RNA polymerase (RNAP) catalyzes the transcription of DNA into RNA using the four ribonucleoside triphosphates as substrates. Forms part of the jaw domain. This is DNA-directed RNA polymerase subunit Rpo1C from Aeropyrum pernix (strain ATCC 700893 / DSM 11879 / JCM 9820 / NBRC 100138 / K1).